Here is a 160-residue protein sequence, read N- to C-terminus: 2-C-methyl-D-erythritol 2,4-cyclodiphosphate synthase (160 aa).

A divalent metal cation-binding residues include Asp10 and His12. 4-CDP-2-C-methyl-D-erythritol 2-phosphate contacts are provided by residues 10-12 and 36-37; these read DVH and HS. His44 is an a divalent metal cation binding site. 4-CDP-2-C-methyl-D-erythritol 2-phosphate contacts are provided by residues 58-60, 63-67, 102-108, 134-137, Phe141, and Arg144; these read DIG, FPDTD, AQAPKML, and TTTE.

The protein belongs to the IspF family. Homotrimer. It depends on a divalent metal cation as a cofactor.

It catalyses the reaction 4-CDP-2-C-methyl-D-erythritol 2-phosphate = 2-C-methyl-D-erythritol 2,4-cyclic diphosphate + CMP. It functions in the pathway isoprenoid biosynthesis; isopentenyl diphosphate biosynthesis via DXP pathway; isopentenyl diphosphate from 1-deoxy-D-xylulose 5-phosphate: step 4/6. Its function is as follows. Involved in the biosynthesis of isopentenyl diphosphate (IPP) and dimethylallyl diphosphate (DMAPP), two major building blocks of isoprenoid compounds. Catalyzes the conversion of 4-diphosphocytidyl-2-C-methyl-D-erythritol 2-phosphate (CDP-ME2P) to 2-C-methyl-D-erythritol 2,4-cyclodiphosphate (ME-CPP) with a corresponding release of cytidine 5-monophosphate (CMP). This Shewanella amazonensis (strain ATCC BAA-1098 / SB2B) protein is 2-C-methyl-D-erythritol 2,4-cyclodiphosphate synthase.